A 372-amino-acid polypeptide reads, in one-letter code: MPLPDFHVSEPFTLGIELEMQVVNPPGYDLSQDSSMLIDAVKNKITAGEVKHDITESMLELATDVCRDINQAAGQFSAMQKVVLQAAADHHLEICGGGTHPFQKWQRQEVCDNERYQRTLENFGYLIQQATVFGQHVHVGCASGDDAIYLLHGLSRFVPHFIALSAASPYMQGTDTRFASSRPNIFSAFPDNGPMPWVSNWQQFEALFRCLSYTTMIDSIKDLHWDIRPSPHFGTVEVRVMDTPLTLSHAVNMAGLIQATAHWLLTERPFKHQEKDYLLYKFNRFQACRYGLEGVITDPHTGDRRPLTEDTLRLLEKIAPSAHKMGASSAIEALHRQVVSGLNEAQLMRDFVADGGSLIGLVKKHCEIWAGD.

The protein belongs to the glutamate--cysteine ligase type 2 family. YbdK subfamily. As to quaternary structure, homodimer.

The catalysed reaction is L-cysteine + L-glutamate + ATP = gamma-L-glutamyl-L-cysteine + ADP + phosphate + H(+). ATP-dependent carboxylate-amine ligase which exhibits weak glutamate--cysteine ligase activity. The sequence is that of Putative glutamate--cysteine ligase 2 (ybdK) from Escherichia coli O139:H28 (strain E24377A / ETEC).